Reading from the N-terminus, the 236-residue chain is MAPDPWFSTYDSTCQIAQEIAEKIQERNQCERRGEKTPKLTLTIRTLLKNLKVKIDLLKDLLLRAVSTRQITQLEGDRRQNLLDDLVTRERLLLASFKNEGSEPDLIRSSLMSEEAKRGTPNPWLCEEPEETRGLGFDEIRQQQQKIIQEQDAGLDALSSIISRQKQMGQEIGNELDEQNEIIDDLANLVENTDEKLRTEARRVTLVDRKSASCGMIMVILLLLVAIVVVAVWPTN.

Topologically, residues 1-215 are cytoplasmic; sequence MAPDPWFSTY…LVDRKSASCG (215 aa). Residues 42-65 adopt a coiled-coil conformation; the sequence is LTIRTLLKNLKVKIDLLKDLLLRA. 2 positions are modified to phosphoserine: Ser102 and Ser160. The t-SNARE coiled-coil homology domain occupies 145 to 207; the sequence is QKIIQEQDAG…RTEARRVTLV (63 aa). A helical; Anchor for type IV membrane protein transmembrane segment spans residues 216–232; the sequence is MIMVILLLLVAIVVVAV. The Vesicular portion of the chain corresponds to 233–236; sequence WPTN.

It belongs to the syntaxin family. In terms of assembly, part of the SNARE core complex containing STX7, VAMP8 and VTI1B. Interacts with VAMP8. Forms a SNARE complex with STX7, VTI1B and VAMP8 which functions in the homotypic fusion of late endosomes. Component of the SNARE complex composed of STX7, STX8, VAMP7 and VTI1B that is required for heterotypic fusion of late endosomes with lysosomes. Interacts with HECTD3. Interacts with TPC1. In terms of processing, ubiquitinated by HECTD3. In terms of tissue distribution, widely expressed in all tissues examined.

The protein resides in the membrane. Functionally, vesicle trafficking protein that functions in the early secretory pathway, possibly by mediating retrograde transport from cis-Golgi membranes to the ER. The sequence is that of Syntaxin-8 (Stx8) from Rattus norvegicus (Rat).